An 86-amino-acid chain; its full sequence is Large ribosomal subunit protein uL23 (86 aa).

It belongs to the universal ribosomal protein uL23 family. In terms of assembly, part of the 50S ribosomal subunit. Contacts protein L29.

Binds to 23S rRNA. One of the proteins that surrounds the polypeptide exit tunnel on the outside of the ribosome. The chain is Large ribosomal subunit protein uL23 from Methanococcus maripaludis (strain C5 / ATCC BAA-1333).